A 140-amino-acid chain; its full sequence is uncharacterized protein (140 aa).

It belongs to the MG439/MG440 family.

This is an uncharacterized protein from Mycoplasma pneumoniae (strain ATCC 29342 / M129 / Subtype 1) (Mycoplasmoides pneumoniae).